The primary structure comprises 182 residues: MGVIENIENTSFESVKKSDKSSTLMESKNSDLCPITPYLTEEKVKVTSRLNEDLSTPVEDVFDMCVSGSNQKNNLGTSAAKKKLVFSSNEYVSENECENGSLMETVYESVLEDIICKQAEDILAEILVSGSSRDVLKTPPSAARADGLVETCPGAPMKRKQVRNKRTVDMNLCRKLDFDSCV.

In Helianthus annuus (Common sunflower), this protein is Unknown protein 1.